The sequence spans 558 residues: Acid-sensing ion channel 4-B (558 aa).

Residues 1-71 (MPIEFVCKIK…TSERLGFRQT (71 aa)) are Cytoplasmic-facing. A helical transmembrane segment spans residues 72–92 (LWGLALLVSLGLFLYQATWSA). At 93–433 (ATYLERPHLA…ETIEQKKAYD (341 aa)) the chain is on the extracellular side. 2 disulfide bridges follow: Cys120/Cys204 and Cys182/Cys189. Residues Asn140, Asn183, Asn188, Asn210, and Asn245 are each glycosylated (N-linked (GlcNAc...) asparagine). Cystine bridges form between Cys298/Cys373, Cys317/Cys369, Cys321/Cys367, Cys330/Cys351, and Cys332/Cys344. Asn374 carries an N-linked (GlcNAc...) asparagine glycan. Residues 434–454 (IAGLLGDIGGQMGLFIGASIL) form a helical membrane-spanning segment. The short motif at 450–452 (GAS) is the GAS motif; ion selectivity filter element. Over 455-558 (TILEILDYIY…QQAVQQDFAC (104 aa)) the chain is Cytoplasmic.

It belongs to the amiloride-sensitive sodium channel (TC 1.A.6) family. ASIC4 subfamily. Homotrimer. Heterotrimer; with other ASIC proteins producing functional channels. As to expression, expressed in central nervous system.

It localises to the cell membrane. The catalysed reaction is Na(+)(in) = Na(+)(out). In terms of biological role, does not exhibit measurable stand-alone pH-gated sodium channel activity but may form pH-gated heterotrimeric sodium channels. The protein is Acid-sensing ion channel 4-B of Danio rerio (Zebrafish).